We begin with the raw amino-acid sequence, 275 residues long: 3-methyl-2-oxobutanoate hydroxymethyltransferase (275 aa).

Mg(2+)-binding residues include Asp44 and Asp83. Residues 44–45 (DS), Asp83, and Lys113 contribute to the 3-methyl-2-oxobutanoate site. Glu115 is a Mg(2+) binding site. The Proton acceptor role is filled by Glu182.

This sequence belongs to the PanB family. Homodecamer; pentamer of dimers. The cofactor is Mg(2+).

It localises to the cytoplasm. It catalyses the reaction 3-methyl-2-oxobutanoate + (6R)-5,10-methylene-5,6,7,8-tetrahydrofolate + H2O = 2-dehydropantoate + (6S)-5,6,7,8-tetrahydrofolate. Its pathway is cofactor biosynthesis; (R)-pantothenate biosynthesis; (R)-pantoate from 3-methyl-2-oxobutanoate: step 1/2. Functionally, catalyzes the reversible reaction in which hydroxymethyl group from 5,10-methylenetetrahydrofolate is transferred onto alpha-ketoisovalerate to form ketopantoate. The chain is 3-methyl-2-oxobutanoate hydroxymethyltransferase from Clostridium botulinum (strain Loch Maree / Type A3).